We begin with the raw amino-acid sequence, 478 residues long: MKSTVEKLSPTRVRINVEVPFTELEPDFDRAFKELAKQVRLPGFRPGKAPRKLLEARVGREAMLDQVVGEAVPGRYTEAVTSSDVQPLGQPEIEITKKEYGEDLVFTAEVDVRPEITLPDLSALEITVDPIEITDEEVDTELQSLRARFGTLTGVDRPAKDGDFVSIDLSATVDGKDVPEATTEGLSHEVGSGQLIEGLDDAIVGLSEGESKEFTTTLAAGEHAGKEAIVTVTVKSIKERELPEPDDEFAQLASEFDTIDELKESLTEQVRRVKRVQQAEQIRDKALELLLEQTEVPLPEKIVQAQIDDTVHNAIHGLDHDEDRFAEQLAEQGSSREEFDANTRTEAEKAVKTQLLMDALADQLEVQVGQGDLTERLVLMSRQYGLEPQQLLQILQQNNQLPAMFADVRRGLTIAAVVHGATVKDTDGNDIDTTEFFGPSGGAQAEAEGADEADADSDADSDTEADSDTEADEADEAK.

The region spanning 162–243 (GDFVSIDLSA…VKSIKERELP (82 aa)) is the PPIase FKBP-type domain. Residues 424-478 (KDTDGNDIDTTEFFGPSGGAQAEAEGADEADADSDADSDTEADSDTEADEADEAK) are disordered. Acidic residues predominate over residues 448-478 (EGADEADADSDADSDTEADSDTEADEADEAK).

This sequence belongs to the FKBP-type PPIase family. Tig subfamily.

The protein resides in the cytoplasm. It carries out the reaction [protein]-peptidylproline (omega=180) = [protein]-peptidylproline (omega=0). In terms of biological role, involved in protein export. Acts as a chaperone by maintaining the newly synthesized protein in an open conformation. Functions as a peptidyl-prolyl cis-trans isomerase. The protein is Trigger factor of Mycobacterium sp. (strain KMS).